A 106-amino-acid polypeptide reads, in one-letter code: Iron-sulfur cluster assembly protein CyaY (106 aa).

This sequence belongs to the frataxin family.

Its function is as follows. Involved in iron-sulfur (Fe-S) cluster assembly. May act as a regulator of Fe-S biogenesis. The polypeptide is Iron-sulfur cluster assembly protein CyaY (Escherichia coli (strain SMS-3-5 / SECEC)).